The following is a 433-amino-acid chain: 5-methylthioadenosine/S-adenosylhomocysteine deaminase (433 aa).

The Zn(2+) site is built by His-62 and His-64. Substrate contacts are provided by Glu-91, Arg-143, and His-183. Residue His-210 coordinates Zn(2+). Positions 213 and 298 each coordinate substrate. Asp-298 is a binding site for Zn(2+).

This sequence belongs to the metallo-dependent hydrolases superfamily. MTA/SAH deaminase family. Requires Zn(2+) as cofactor.

The catalysed reaction is S-adenosyl-L-homocysteine + H2O + H(+) = S-inosyl-L-homocysteine + NH4(+). It carries out the reaction S-methyl-5'-thioadenosine + H2O + H(+) = S-methyl-5'-thioinosine + NH4(+). Functionally, catalyzes the deamination of 5-methylthioadenosine and S-adenosyl-L-homocysteine into 5-methylthioinosine and S-inosyl-L-homocysteine, respectively. Is also able to deaminate adenosine. The sequence is that of 5-methylthioadenosine/S-adenosylhomocysteine deaminase from Caldanaerobacter subterraneus subsp. tengcongensis (strain DSM 15242 / JCM 11007 / NBRC 100824 / MB4) (Thermoanaerobacter tengcongensis).